The primary structure comprises 148 residues: [Ribosomal protein bS18]-alanine N-acetyltransferase (148 aa).

The 146-residue stretch at 2–147 folds into the N-acetyltransferase domain; that stretch reads NTISILSTTD…DAIIMALPIS (146 aa). Acetyl-CoA contacts are provided by residues 69-71 and 77-82; these read IAV and RRGLGR. Catalysis depends on glutamate 103, which acts as the Proton acceptor. Residue asparagine 108 coordinates acetyl-CoA. The active-site Proton donor is the tyrosine 115.

Belongs to the acetyltransferase family. RimI subfamily.

It is found in the cytoplasm. The enzyme catalyses N-terminal L-alanyl-[ribosomal protein bS18] + acetyl-CoA = N-terminal N(alpha)-acetyl-L-alanyl-[ribosomal protein bS18] + CoA + H(+). Its function is as follows. Acetylates the N-terminal alanine of ribosomal protein bS18. The polypeptide is [Ribosomal protein bS18]-alanine N-acetyltransferase (Salmonella typhimurium (strain LT2 / SGSC1412 / ATCC 700720)).